The chain runs to 236 residues: Small ribosomal subunit protein uS2c (236 aa).

The protein belongs to the universal ribosomal protein uS2 family.

It is found in the plastid. The protein resides in the chloroplast. In Lepidium virginicum (Virginia pepperweed), this protein is Small ribosomal subunit protein uS2c (rps2).